A 173-amino-acid chain; its full sequence is Transcription factor E (173 aa).

The region spanning 9 to 92 is the HTH TFE/IIEalpha-type domain; the sequence is ADKAIFAYLH…LWELELDNMY (84 aa).

The protein belongs to the TFE family. Monomer. Interaction with RNA polymerase subunits RpoF and RpoE is necessary for Tfe stimulatory transcription activity. Able to interact with Tbp and RNA polymerase in the absence of DNA promoter. Interacts both with the preinitiation and elongation complexes.

In terms of biological role, transcription factor that plays a role in the activation of archaeal genes transcribed by RNA polymerase. Facilitates transcription initiation by enhancing TATA-box recognition by TATA-box-binding protein (Tbp), and transcription factor B (Tfb) and RNA polymerase recruitment. Not absolutely required for transcription in vitro, but particularly important in cases where Tbp or Tfb function is not optimal. It dynamically alters the nucleic acid-binding properties of RNA polymerases by stabilizing the initiation complex and destabilizing elongation complexes. Seems to translocate with the RNA polymerase following initiation and acts by binding to the non template strand of the transcription bubble in elongation complexes. This Methanospirillum hungatei JF-1 (strain ATCC 27890 / DSM 864 / NBRC 100397 / JF-1) protein is Transcription factor E.